The primary structure comprises 498 residues: 3-octaprenyl-4-hydroxybenzoate carboxy-lyase (498 aa).

Mn(2+) is bound at residue Asn175. Prenylated FMN contacts are provided by residues 178-180 (IYR), 192-194 (RWL), and 197-198 (RG). Residue Glu241 participates in Mn(2+) binding. The Proton donor role is filled by Asp290.

This sequence belongs to the UbiD family. As to quaternary structure, homohexamer. Prenylated FMN serves as cofactor. Requires Mn(2+) as cofactor.

The protein localises to the cell membrane. The enzyme catalyses a 4-hydroxy-3-(all-trans-polyprenyl)benzoate + H(+) = a 2-(all-trans-polyprenyl)phenol + CO2. It participates in cofactor biosynthesis; ubiquinone biosynthesis. Catalyzes the decarboxylation of 3-octaprenyl-4-hydroxy benzoate to 2-octaprenylphenol, an intermediate step in ubiquinone biosynthesis. The sequence is that of 3-octaprenyl-4-hydroxybenzoate carboxy-lyase from Pectobacterium atrosepticum (strain SCRI 1043 / ATCC BAA-672) (Erwinia carotovora subsp. atroseptica).